The chain runs to 183 residues: Large ribosomal subunit protein bL27m (183 aa).

The N-terminal 34 residues, 1-34 (MFLRPTSIPSAVSQIRAQLFAGPSSLASQIQVRW), are a transit peptide targeting the mitochondrion.

It belongs to the bacterial ribosomal protein bL27 family.

The protein localises to the mitochondrion. The chain is Large ribosomal subunit protein bL27m (RPL27) from Cryptococcus neoformans var. neoformans serotype D (strain B-3501A) (Filobasidiella neoformans).